The primary structure comprises 228 residues: Adenosylcobinamide-GDP ribazoletransferase (228 aa).

A run of 6 helical transmembrane segments spans residues 24–44 (VWML…ILYL), 50–70 (NVLS…DGLA), 96–116 (IAGT…LFSA), 117–137 (PFYS…LALA), 159–176 (VFLG…ILLY), and 181–198 (IFAL…KISL).

It belongs to the CobS family. Requires Mg(2+) as cofactor.

It localises to the cell membrane. The catalysed reaction is alpha-ribazole + adenosylcob(III)inamide-GDP = adenosylcob(III)alamin + GMP + H(+). The enzyme catalyses alpha-ribazole 5'-phosphate + adenosylcob(III)inamide-GDP = adenosylcob(III)alamin 5'-phosphate + GMP + H(+). The protein operates within cofactor biosynthesis; adenosylcobalamin biosynthesis; adenosylcobalamin from cob(II)yrinate a,c-diamide: step 7/7. Joins adenosylcobinamide-GDP and alpha-ribazole to generate adenosylcobalamin (Ado-cobalamin). Also synthesizes adenosylcobalamin 5'-phosphate from adenosylcobinamide-GDP and alpha-ribazole 5'-phosphate. This Pyrococcus furiosus (strain ATCC 43587 / DSM 3638 / JCM 8422 / Vc1) protein is Adenosylcobinamide-GDP ribazoletransferase.